The primary structure comprises 410 residues: Killer cell immunoglobulin-like receptor 3DL3 (410 aa).

Residues 1-25 (MSLMVVSMACVGFFLLEGPWPHVGG) form the signal peptide. Residues 26-322 (QDKPFLSAWP…VSVTGNSRHL (297 aa)) lie on the Extracellular side of the membrane. Ig-like C2-type domains lie at 42-97 (GQHV…RCCS), 137-197 (GETV…RCFG), and 237-295 (GENV…RCFG). Cystine bridges form between Cys-49-Cys-95 and Cys-144-Cys-195. 3 N-linked (GlcNAc...) asparagine glycosylation sites follow: Asn-179, Asn-239, and Asn-273. A disulfide bridge connects residues Cys-244 and Cys-293. The chain crosses the membrane as a helical span at residues 323–343 (HVLIGTSVVIIPFAILLFFLL). At 344–410 (HRWCANKKNA…PKTPPTDTSV (67 aa)) the chain is on the cytoplasmic side.

Belongs to the immunoglobulin superfamily.

Its subcellular location is the cell membrane. In terms of biological role, receptor on natural killer cells. May inhibit the activity of NK cells thus preventing cell lysis. This Homo sapiens (Human) protein is Killer cell immunoglobulin-like receptor 3DL3 (KIR3DL3).